Here is a 276-residue protein sequence, read N- to C-terminus: MATNIGMMDSAYFVGRNEILTWINDRLHLNLSRVEEAASGAVQCQMLDMTFPGVVPMHKVNFDAKNEYDMIQNYKVLQDVFNKLKITKPLEINRLVKGRPLDNLEFLQWLKRFCDSINGGIMNENYNPVERRSRNGKERSVKGSNKIPKSLQTNNNHPPPNSSSVGLSKASGPKSAKAAEVQALSKELVDLKISTDLLEKERDFYFSKLRDVEILCQTPELDDLPIVVAVKKILYATDANESALEDAQEYLNQSLGVEDDEAEGNGEQLEEEKTQA.

A Calponin-homology (CH) domain is found at 13 to 115 (FVGRNEILTW…FLQWLKRFCD (103 aa)). The disordered stretch occupies residues 124–172 (ENYNPVERRSRNGKERSVKGSNKIPKSLQTNNNHPPPNSSSVGLSKASG). The span at 129-141 (VERRSRNGKERSV) shows a compositional bias: basic and acidic residues. Residues 162–172 (SSSVGLSKASG) are compositionally biased toward low complexity. Residues 173–243 (PKSAKAAEVQ…LYATDANESA (71 aa)) form the EB1 C-terminal domain. Residues 252–276 (NQSLGVEDDEAEGNGEQLEEEKTQA) form a disordered region. Residues 257–270 (VEDDEAEGNGEQLE) are compositionally biased toward acidic residues.

The protein belongs to the MAPRE family. In terms of assembly, homodimer and heterodimer with EB1B. Interacts with tobamovirus movement protein. As to expression, highly expressed in guard cells of leaf stomata, pollen grains and pollen tubes. Expressed in young roots.

It is found in the cytoplasm. Its subcellular location is the cytoskeleton. The protein localises to the spindle pole. The protein resides in the phragmoplast. In terms of biological role, binds to the plus end of microtubules and regulates the dynamics of the microtubule cytoskeleton. May be involved in anchoring microtubules to their nucleation sites and/or functioning as a reservoir for distribution to the growing end. In plants, microtubule minus ends are not necessarily severed from the nucleation site and transported to the plus end of a microtubule as part of the recycling process. May play a role in endomembrane organization during polarized growth of plant cells. Interacts with the tobamovirus movement protein (MP) and may play a role in the association of MP with the microtubule system during infection. In Arabidopsis thaliana (Mouse-ear cress), this protein is Microtubule-associated protein RP/EB family member 1A (EB1A).